The chain runs to 138 residues: Large ribosomal subunit protein uL16 (138 aa).

A compositionally biased stretch (basic residues) spans M1–G19. The tract at residues M1–G24 is disordered.

The protein belongs to the universal ribosomal protein uL16 family. As to quaternary structure, part of the 50S ribosomal subunit.

Its function is as follows. Binds 23S rRNA and is also seen to make contacts with the A and possibly P site tRNAs. This Mycobacteroides abscessus (strain ATCC 19977 / DSM 44196 / CCUG 20993 / CIP 104536 / JCM 13569 / NCTC 13031 / TMC 1543 / L948) (Mycobacterium abscessus) protein is Large ribosomal subunit protein uL16.